Reading from the N-terminus, the 67-residue chain is Protein C' (67 aa).

Belongs to the rhabdoviruses C protein family.

Its function is as follows. Seems to stimulates transcription by the viral polymerase. May play a role in viral pathogenesis or transmission by insects vectors. The chain is Protein C' (P) from Vesicular stomatitis Indiana virus (strain San Juan) (VSIV).